Here is a 246-residue protein sequence, read N- to C-terminus: MLCCMRRTKQVEKNEDGDQKIEQDGIKPEDKAHKAATKIQASFRGHITRKKLKGEKKADAPASESEAADKKDEGPAGGAAENKESEASAATEASAADSAQLDEGSKDSSVPAEEKKGNGAADTGSEQPAPQAATPAASSEEKPAAAAETESATKASTDNSPSLKADEAQDKEEPKQADVPAADTTATTTPAAEDATAKATAQPQMETVESSQTEEKTDAVEETKPTESAQQEEVKEEESKADQENA.

Positions 1 to 246 (MLCCMRRTKQ…EESKADQENA (246 aa)) are disordered. 2 S-palmitoyl cysteine lipidation sites follow: Cys-3 and Cys-4. Basic and acidic residues predominate over residues 9-33 (KQVEKNEDGDQKIEQDGIKPEDKAH). The region spanning 32-61 (AHKAATKIQASFRGHITRKKLKGEKKADAP) is the IQ domain. Composition is skewed to low complexity over residues 87-99 (ASAATEASAADSA) and 125-157 (SEQPAPQAATPAASSEEKPAAAAETESATKAST). Over residues 164–176 (KADEAQDKEEPKQ) the composition is skewed to basic and acidic residues. Residues 177 to 203 (ADVPAADTTATTTPAAEDATAKATAQP) are compositionally biased toward low complexity. Basic and acidic residues-rich tracts occupy residues 213 to 225 (TEEKTDAVEETKP) and 237 to 246 (EESKADQENA).

Belongs to the neuromodulin family. In terms of assembly, binds calmodulin with a greater affinity in the absence of Ca(2+) than in its presence. Palmitoylated. Palmitoylation is essential for plasma membrane association. In terms of tissue distribution, expressed in neurons.

It localises to the cell membrane. The protein localises to the cell projection. It is found in the growth cone membrane. Its subcellular location is the synapse. The protein resides in the filopodium membrane. Functionally, this protein is associated with nerve growth. It is a major component of the motile 'growth cones' that form the tips of elongating axons. Plays a role in axonal and dendritic filopodia induction. The sequence is that of Neuromodulin (GAP43) from Gallus gallus (Chicken).